Here is a 622-residue protein sequence, read N- to C-terminus: Cilia- and flagella-associated protein 206 (622 aa).

It belongs to the CFAP206 family.

It localises to the cytoplasm. The protein resides in the cytoskeleton. Its subcellular location is the cilium axoneme. It is found in the cilium basal body. Its function is as follows. Essential for sperm motility and is involved in the regulation of the beating frequency of motile cilia on the epithelial cells of the respiratory tract. Required for the establishment of radial spokes in sperm flagella. The polypeptide is Cilia- and flagella-associated protein 206 (Rattus norvegicus (Rat)).